Consider the following 1353-residue polypeptide: Patatin-like phospholipase domain-containing protein ZK370.4 (1353 aa).

A helical membrane pass occupies residues 12–32 (IFLVTFIYNHVLLILFTVCII). Residues 49–64 (TPSSASSSATPSSRNS) show a composition bias toward low complexity. 2 disordered regions span residues 49 to 188 (TPSS…STAF) and 199 to 218 (SRSY…VRPP). Positions 91–123 (SPKSGTPTNTQTIEPPTSLNLNMVNSASGSNLS) are enriched in polar residues. 2 stretches are compositionally biased toward basic residues: residues 126-138 (RRMR…KKLY) and 170-184 (PRRR…RRRQ). Residues 245–372 (LKML…VITR), 444–581 (FGLV…VLRR), and 570–692 (IYLP…LGQY) contribute to the a nucleoside 3',5'-cyclic phosphate site. Residues 942-1108 (LVLGGGGARG…VNNVPADVMR (167 aa)) enclose the PNPLA domain. Positions 946-951 (GGGARG) match the GXGXXG motif. Residues 973–977 (GTSIG) carry the GXSXG motif. Residue serine 975 is the Nucleophile of the active site. Aspartate 1095 functions as the Proton acceptor in the catalytic mechanism. The DGA/G signature appears at 1095–1097 (DGG). 3 disordered regions span residues 1230-1249 (EKET…PDVS), 1274-1293 (SMSL…DHFL), and 1305-1353 (YEEE…PPSS). A compositionally biased stretch (low complexity) spans 1328 to 1337 (GPPSSSSSGG).

Belongs to the NTE family.

It is found in the membrane. This chain is Patatin-like phospholipase domain-containing protein ZK370.4, found in Caenorhabditis elegans.